We begin with the raw amino-acid sequence, 271 residues long: 3-methyl-2-oxobutanoate hydroxymethyltransferase (271 aa).

Mg(2+) is bound by residues D51 and D90. 3-methyl-2-oxobutanoate contacts are provided by residues 51–52 (DS), D90, and K118. E120 contributes to the Mg(2+) binding site. E186 (proton acceptor) is an active-site residue.

Belongs to the PanB family. In terms of assembly, homodecamer; pentamer of dimers. The cofactor is Mg(2+).

Its subcellular location is the cytoplasm. The enzyme catalyses 3-methyl-2-oxobutanoate + (6R)-5,10-methylene-5,6,7,8-tetrahydrofolate + H2O = 2-dehydropantoate + (6S)-5,6,7,8-tetrahydrofolate. It participates in cofactor biosynthesis; (R)-pantothenate biosynthesis; (R)-pantoate from 3-methyl-2-oxobutanoate: step 1/2. Functionally, catalyzes the reversible reaction in which hydroxymethyl group from 5,10-methylenetetrahydrofolate is transferred onto alpha-ketoisovalerate to form ketopantoate. This Xanthomonas axonopodis pv. citri (strain 306) protein is 3-methyl-2-oxobutanoate hydroxymethyltransferase.